The sequence spans 479 residues: Aspartyl/glutamyl-tRNA(Asn/Gln) amidotransferase subunit B (479 aa).

This sequence belongs to the GatB/GatE family. GatB subfamily. As to quaternary structure, heterotrimer of A, B and C subunits.

The enzyme catalyses L-glutamyl-tRNA(Gln) + L-glutamine + ATP + H2O = L-glutaminyl-tRNA(Gln) + L-glutamate + ADP + phosphate + H(+). The catalysed reaction is L-aspartyl-tRNA(Asn) + L-glutamine + ATP + H2O = L-asparaginyl-tRNA(Asn) + L-glutamate + ADP + phosphate + 2 H(+). In terms of biological role, allows the formation of correctly charged Asn-tRNA(Asn) or Gln-tRNA(Gln) through the transamidation of misacylated Asp-tRNA(Asn) or Glu-tRNA(Gln) in organisms which lack either or both of asparaginyl-tRNA or glutaminyl-tRNA synthetases. The reaction takes place in the presence of glutamine and ATP through an activated phospho-Asp-tRNA(Asn) or phospho-Glu-tRNA(Gln). This Mycoplasma mycoides subsp. mycoides SC (strain CCUG 32753 / NCTC 10114 / PG1) protein is Aspartyl/glutamyl-tRNA(Asn/Gln) amidotransferase subunit B.